A 361-amino-acid chain; its full sequence is 5-formaminoimidazole-4-carboxamide-1-(beta)-D-ribofuranosyl 5'-monophosphate synthetase (361 aa).

Positions 27 and 94 each coordinate 5-amino-1-(5-phospho-beta-D-ribosyl)imidazole-4-carboxamide. Positions 116–348 (RAILRWEAER…MGQRIAKEIK (233 aa)) constitute an ATP-grasp domain. ATP is bound by residues 146–208 (PDDI…ANYC) and glutamate 230. Asparagine 258 contacts 5-amino-1-(5-phospho-beta-D-ribosyl)imidazole-4-carboxamide. Mg(2+) contacts are provided by glutamine 297 and glutamate 310.

Belongs to the phosphohexose mutase family. Requires Mg(2+) as cofactor. It depends on Mn(2+) as a cofactor.

The enzyme catalyses 5-amino-1-(5-phospho-beta-D-ribosyl)imidazole-4-carboxamide + formate + ATP = 5-formamido-1-(5-phospho-D-ribosyl)imidazole-4-carboxamide + ADP + phosphate. It functions in the pathway purine metabolism; IMP biosynthesis via de novo pathway; 5-formamido-1-(5-phospho-D-ribosyl)imidazole-4-carboxamide from 5-amino-1-(5-phospho-D-ribosyl)imidazole-4-carboxamide (formate route): step 1/1. Functionally, catalyzes the ATP- and formate-dependent formylation of 5-aminoimidazole-4-carboxamide-1-beta-d-ribofuranosyl 5'-monophosphate (AICAR) to 5-formaminoimidazole-4-carboxamide-1-beta-d-ribofuranosyl 5'-monophosphate (FAICAR) in the absence of folates. This chain is 5-formaminoimidazole-4-carboxamide-1-(beta)-D-ribofuranosyl 5'-monophosphate synthetase, found in Methanococcus maripaludis (strain C6 / ATCC BAA-1332).